Here is a 1172-residue protein sequence, read N- to C-terminus: Carbamoyl phosphate synthase arginine-specific large chain, chloroplastic (1172 aa).

Over residues Met-1 to Thr-10 the composition is skewed to polar residues. Positions Met-1–His-37 are disordered. A chloroplast-targeting transit peptide spans Met-1–Arg-50. The carboxyphosphate synthetic domain stretch occupies residues Gly-72 to Glu-473. ATP is bound by residues Arg-199, Arg-240, Gly-246, Gly-247, Lys-279, Leu-281, Glu-286, Gly-312, Val-313, His-314, Gln-356, and Glu-370. The 197-residue stretch at Lys-203 to Val-399 folds into the ATP-grasp 1 domain. Positions 356, 370, and 372 each coordinate Mg(2+). An oligomerization domain region spans residues Thr-474–Ser-623. The segment at Val-624–Ala-1019 is carbamoyl phosphate synthetic domain. Positions Asn-761 to Ser-954 constitute an ATP-grasp 2 domain. ATP-binding residues include Arg-797, Lys-836, Leu-838, Glu-843, Gly-869, Ile-870, His-871, Ser-872, Gln-912, and Glu-925. Mg(2+)-binding residues include Gln-912, Glu-925, and Asn-927. An allosteric domain region spans residues Gly-1020 to Ser-1172. Residues Gln-1021–Ser-1162 form the MGS-like domain.

It belongs to the CarB family. In terms of assembly, heterodimer composed of 2 chains; the small (or glutamine) chain promotes the hydrolysis of glutamine to ammonia, which is used by the large (or ammonia) chain to synthesize carbamoyl phosphate. Mg(2+) is required as a cofactor. It depends on Mn(2+) as a cofactor.

It is found in the plastid. Its subcellular location is the chloroplast. It carries out the reaction hydrogencarbonate + L-glutamine + 2 ATP + H2O = carbamoyl phosphate + L-glutamate + 2 ADP + phosphate + 2 H(+). The enzyme catalyses hydrogencarbonate + NH4(+) + 2 ATP = carbamoyl phosphate + 2 ADP + phosphate + 2 H(+). Its pathway is amino-acid biosynthesis; L-arginine biosynthesis; carbamoyl phosphate from bicarbonate: step 1/1. Its function is as follows. Large subunit of the arginine-specific carbamoyl phosphate synthase (CPSase). CPSase catalyzes the formation of carbamoyl phosphate from the ammonia moiety of glutamine, hydrogencarbonate, and phosphate donated by ATP, constituting the first step of 2 biosynthetic pathways, one leading to arginine and/or urea and the other to pyrimidine nucleotides. The large subunit (synthetase) binds the substrates ammonia (free or transferred from glutamine from the small subunit), hydrogencarbonate and ATP and carries out an ATP-coupled ligase reaction, activating hydrogencarbonate by forming carboxy phosphate which reacts with ammonia to form carbamoyl phosphate. In Oryza sativa subsp. japonica (Rice), this protein is Carbamoyl phosphate synthase arginine-specific large chain, chloroplastic (CARB).